Consider the following 194-residue polypeptide: Holliday junction branch migration complex subunit RuvA (194 aa).

Positions 1–64 (MIGRITGLLL…EDVHLLFGFM (64 aa)) are domain I. The segment at 65–140 (TEQERALFRQ…KIDPVAILSE (76 aa)) is domain II. The tract at residues 140–143 (EAGA) is flexible linker. Residues 144–194 (AASNVDKDILSALLALGYNGREVNRALEQLSEGVTVSDGIMQSLKFLSKVK) are domain III.

Belongs to the RuvA family. In terms of assembly, homotetramer. Forms an RuvA(8)-RuvB(12)-Holliday junction (HJ) complex. HJ DNA is sandwiched between 2 RuvA tetramers; dsDNA enters through RuvA and exits via RuvB. An RuvB hexamer assembles on each DNA strand where it exits the tetramer. Each RuvB hexamer is contacted by two RuvA subunits (via domain III) on 2 adjacent RuvB subunits; this complex drives branch migration. In the full resolvosome a probable DNA-RuvA(4)-RuvB(12)-RuvC(2) complex forms which resolves the HJ.

The protein resides in the cytoplasm. The RuvA-RuvB-RuvC complex processes Holliday junction (HJ) DNA during genetic recombination and DNA repair, while the RuvA-RuvB complex plays an important role in the rescue of blocked DNA replication forks via replication fork reversal (RFR). RuvA specifically binds to HJ cruciform DNA, conferring on it an open structure. The RuvB hexamer acts as an ATP-dependent pump, pulling dsDNA into and through the RuvAB complex. HJ branch migration allows RuvC to scan DNA until it finds its consensus sequence, where it cleaves and resolves the cruciform DNA. The polypeptide is Holliday junction branch migration complex subunit RuvA (Nitrosomonas eutropha (strain DSM 101675 / C91 / Nm57)).